A 432-amino-acid polypeptide reads, in one-letter code: Isocitrate lyase (432 aa).

Residues 1 to 24 (MSNVGKPRTAQEIQQDWDTNPRWN) form a disordered region. Residues 11-22 (QEIQQDWDTNPR) show a composition bias toward polar residues. 93–95 (SGW) is a substrate binding site. A Mg(2+)-binding site is contributed by D155. Residue C193 is the Proton acceptor of the active site. Residues 194 to 195 (GH), R230, 315 to 319 (NCSPS), and T349 each bind substrate.

The protein belongs to the isocitrate lyase/PEP mutase superfamily. Isocitrate lyase family. In terms of assembly, homotetramer. Mg(2+) serves as cofactor.

The enzyme catalyses D-threo-isocitrate = glyoxylate + succinate. It participates in carbohydrate metabolism; glyoxylate cycle; (S)-malate from isocitrate: step 1/2. With respect to regulation, inhibited by 3-phosphoglycerate, 6-phosphogluconate, phosphoenolpyruvate (PEP), fructose 1,6-bisphosphate, glycolate, oxalate, and itaconate. Involved in the metabolic adaptation in response to environmental changes. Catalyzes the reversible formation of succinate and glyoxylate from isocitrate, a key step of the glyoxylate cycle, which operates as an anaplerotic route for replenishing the tricarboxylic acid cycle during growth on fatty acid substrates. This Corynebacterium glutamicum (strain ATCC 13032 / DSM 20300 / JCM 1318 / BCRC 11384 / CCUG 27702 / LMG 3730 / NBRC 12168 / NCIMB 10025 / NRRL B-2784 / 534) protein is Isocitrate lyase.